The chain runs to 329 residues: GMP reductase (329 aa).

Catalysis depends on Cys-178, which acts as the Thioimidate intermediate. NADP(+) is bound at residue 207–230 (IIADGGIRNNGDIAKSIRFGATMC).

This sequence belongs to the IMPDH/GMPR family. GuaC type 2 subfamily.

The catalysed reaction is IMP + NH4(+) + NADP(+) = GMP + NADPH + 2 H(+). Its function is as follows. Catalyzes the irreversible NADPH-dependent deamination of GMP to IMP. It functions in the conversion of nucleobase, nucleoside and nucleotide derivatives of G to A nucleotides, and in maintaining the intracellular balance of A and G nucleotides. The polypeptide is GMP reductase (Lacticaseibacillus paracasei (strain ATCC 334 / BCRC 17002 / CCUG 31169 / CIP 107868 / KCTC 3260 / NRRL B-441) (Lactobacillus paracasei)).